Consider the following 106-residue polypeptide: Ferredoxin (106 aa).

The [3Fe-4S] cluster site is built by Cys8 and Cys16. Residues Cys20, Cys39, Cys42, and Cys45 each coordinate [4Fe-4S] cluster. One can recognise a 4Fe-4S ferredoxin-type domain in the interval 30–59 (RMLYIHPDECVDCGACEPVCPVEAIYYEDD). Position 49 (Cys49) interacts with [3Fe-4S] cluster. Residues 81–106 (PGGASKVGQTDNDPQAIKDLPPQGED) form a disordered region.

It depends on [4Fe-4S] cluster as a cofactor. [3Fe-4S] cluster is required as a cofactor.

Its function is as follows. Ferredoxins are iron-sulfur proteins that transfer electrons in a wide variety of metabolic reactions. The sequence is that of Ferredoxin (fdxA) from Mycolicibacterium smegmatis (Mycobacterium smegmatis).